The chain runs to 106 residues: Trp operon repressor homolog (106 aa).

The DNA-binding element occupies 59–82 (QREIQQILNTSAATITRGSNMIKI).

It belongs to the TrpR family. In terms of assembly, homodimer.

Its subcellular location is the cytoplasm. Functionally, this protein is an aporepressor. When complexed with L-tryptophan it binds the operator region of the trp operon and prevents the initiation of transcription. This Histophilus somni (strain 129Pt) (Haemophilus somnus) protein is Trp operon repressor homolog.